Consider the following 149-residue polypeptide: UPF0260 protein PA1299 (149 aa).

It belongs to the UPF0260 family.

The chain is UPF0260 protein PA1299 from Pseudomonas aeruginosa (strain ATCC 15692 / DSM 22644 / CIP 104116 / JCM 14847 / LMG 12228 / 1C / PRS 101 / PAO1).